Consider the following 165-residue polypeptide: MRGHEPRSSSSCAACKLLKRRCTPTCIFAPYFRSSDLITFAKVHKVFGASNVSKLLGEVPEEQRQETVNSLAYEAEVRLKDPVYGCIGAIASLQKKMLELQHDLAVARTRLLAHSGVNNSQVSPLDDSPELAAFLDLVPYSDLMLLDGSTNLDAYLYDLGQPPFV.

The LOB domain occupies 10–111 (SSCAACKLLK…HDLAVARTRL (102 aa)).

It belongs to the LOB domain-containing protein family.

This Arabidopsis thaliana (Mouse-ear cress) protein is LOB domain-containing protein 21 (LBD21).